Here is a 58-residue protein sequence, read N- to C-terminus: Conotoxin TxXIIIA (58 aa).

The first 22 residues, 1–22 (MRCLPVFVILLLLIASVPSVDA), serve as a signal peptide directing secretion. A propeptide spanning residues 23-46 (ELKAKDDMPQASFHDNAERDQQKK) is cleaved from the precursor.

In terms of assembly, homodimer; disulfide-linked. In terms of processing, 5 disulfide bonds are present in each homodimer: two intrachain disulfide bonds per subunit, and one interchain disulfide bond linking the two subunits. As to expression, expressed by the venom duct.

Its subcellular location is the secreted. The polypeptide is Conotoxin TxXIIIA (Conus textile (Cloth-of-gold cone)).